We begin with the raw amino-acid sequence, 86 residues long: Large ribosomal subunit protein bL27 (86 aa).

The segment at 1–22 (MATKKAGGSSRNGRDSAGRRLG) is disordered.

It belongs to the bacterial ribosomal protein bL27 family.

This Rickettsia bellii (strain RML369-C) protein is Large ribosomal subunit protein bL27.